A 188-amino-acid polypeptide reads, in one-letter code: MFKGQKTLAALAVSLLFTAPVYAADEGSGEIHFKGEVIEAPCEIHPEDIDKNIDLGQVTTTHINREHHSNKVAVDIRLINCDLPASDNGSGMPVSKVGVTFDSTAKTTGATPLLSNTSAGEATGVGVRLMDKNDGNIVLGSAAPDLDLDASSSEQTLNFFAWMEQIDNAVDVTAGEVTANATYVLDYK.

The N-terminal stretch at methionine 1–alanine 23 is a signal peptide. A disulfide bond links cysteine 42 and cysteine 81.

It belongs to the fimbrial protein family.

Its subcellular location is the fimbrium. This is an uncharacterized protein from Escherichia coli (strain K12).